The primary structure comprises 25 residues: Aurein-5.2 (25 aa).

In terms of tissue distribution, expressed by the skin dorsal glands.

The protein resides in the secreted. Its function is as follows. Has antimicrobial activity against L.lactis and S.uberis. This Ranoidea raniformis (Southern bell frog) protein is Aurein-5.2.